The chain runs to 547 residues: Chaperonin GroEL 1 (547 aa).

ATP is bound by residues 30 to 33 (TLGP), K51, 87 to 91 (DGTTT), G415, and D496.

It belongs to the chaperonin (HSP60) family. In terms of assembly, forms a cylinder of 14 subunits composed of two heptameric rings stacked back-to-back. Interacts with the co-chaperonin GroES.

It localises to the cytoplasm. It catalyses the reaction ATP + H2O + a folded polypeptide = ADP + phosphate + an unfolded polypeptide.. Functionally, together with its co-chaperonin GroES, plays an essential role in assisting protein folding. The GroEL-GroES system forms a nano-cage that allows encapsulation of the non-native substrate proteins and provides a physical environment optimized to promote and accelerate protein folding. The protein is Chaperonin GroEL 1 of Rhodopseudomonas palustris (strain BisA53).